A 203-amino-acid chain; its full sequence is Superoxide dismutase [Mn] (203 aa).

Mn(2+) contacts are provided by His27, His81, Asp164, and His168.

The protein belongs to the iron/manganese superoxide dismutase family. In terms of assembly, homodimer. Requires Mn(2+) as cofactor.

It catalyses the reaction 2 superoxide + 2 H(+) = H2O2 + O2. Its function is as follows. Destroys superoxide anion radicals which are normally produced within the cells and which are toxic to biological systems. Partially complements double sodA-sodB deletions in E.coli. The protein is Superoxide dismutase [Mn] of Pseudomonas aeruginosa (strain ATCC 15692 / DSM 22644 / CIP 104116 / JCM 14847 / LMG 12228 / 1C / PRS 101 / PAO1).